Reading from the N-terminus, the 446-residue chain is Phosphoglucosamine mutase (446 aa).

The Phosphoserine intermediate role is filled by serine 102. Residues serine 102, aspartate 239, aspartate 241, and aspartate 243 each coordinate Mg(2+). Serine 102 carries the post-translational modification Phosphoserine.

The protein belongs to the phosphohexose mutase family. Mg(2+) serves as cofactor. Activated by phosphorylation.

It carries out the reaction alpha-D-glucosamine 1-phosphate = D-glucosamine 6-phosphate. Functionally, catalyzes the conversion of glucosamine-6-phosphate to glucosamine-1-phosphate. The sequence is that of Phosphoglucosamine mutase from Solibacter usitatus (strain Ellin6076).